Consider the following 876-residue polypeptide: Leucine--tRNA ligase (876 aa).

The short motif at Pro43–His53 is the 'HIGH' region element. A 'KMSKS' region motif is present at residues Lys630–Ser634. An ATP-binding site is contributed by Lys633.

This sequence belongs to the class-I aminoacyl-tRNA synthetase family.

It localises to the cytoplasm. It catalyses the reaction tRNA(Leu) + L-leucine + ATP = L-leucyl-tRNA(Leu) + AMP + diphosphate. The chain is Leucine--tRNA ligase from Methylocella silvestris (strain DSM 15510 / CIP 108128 / LMG 27833 / NCIMB 13906 / BL2).